Consider the following 412-residue polypeptide: Putative potassium channel protein RPA4233 (412 aa).

Transmembrane regions (helical) follow at residues 35–55, 65–85, 164–184, 202–222, and 225–245; these read FIVF…VPAM, ALEL…IWIA, LMAC…AMHI, WWAI…ATGI, and MVAS…VGIV. Positions 210 to 215 match the Selectivity filter motif; that stretch reads TIGYGD. Residue 270 to 388 participates in a nucleoside 3',5'-cyclic phosphate binding; it reads LFSHLTAGDI…RKINQIVEGR (119 aa).

It belongs to the potassium channel family.

The protein resides in the cell membrane. The chain is Putative potassium channel protein RPA4233 from Rhodopseudomonas palustris (strain ATCC BAA-98 / CGA009).